The chain runs to 369 residues: 4-hydroxy-3-methylbut-2-en-1-yl diphosphate synthase (flavodoxin) (369 aa).

Residues cysteine 270, cysteine 273, cysteine 305, and glutamate 312 each contribute to the [4Fe-4S] cluster site.

The protein belongs to the IspG family. It depends on [4Fe-4S] cluster as a cofactor.

It catalyses the reaction (2E)-4-hydroxy-3-methylbut-2-enyl diphosphate + oxidized [flavodoxin] + H2O + 2 H(+) = 2-C-methyl-D-erythritol 2,4-cyclic diphosphate + reduced [flavodoxin]. It participates in isoprenoid biosynthesis; isopentenyl diphosphate biosynthesis via DXP pathway; isopentenyl diphosphate from 1-deoxy-D-xylulose 5-phosphate: step 5/6. Functionally, converts 2C-methyl-D-erythritol 2,4-cyclodiphosphate (ME-2,4cPP) into 1-hydroxy-2-methyl-2-(E)-butenyl 4-diphosphate. This Pseudomonas fluorescens (strain ATCC BAA-477 / NRRL B-23932 / Pf-5) protein is 4-hydroxy-3-methylbut-2-en-1-yl diphosphate synthase (flavodoxin).